Consider the following 300-residue polypeptide: B1 kinase (300 aa).

Residues 16–282 enclose the Protein kinase domain; that stretch reads WVVGPLIGKG…ITMVNSLTYF (267 aa). ATP-binding positions include 22-30 and K45; that span reads IGKGGFGSI. The active-site Proton acceptor is the D147.

It belongs to the protein kinase superfamily. Ser/Thr protein kinase family. Poxviruses subfamily. In terms of assembly, interacts with host JIP1; this interaction increases the amount of MAPK bound to JIP1 and subsequently increases the activity of transcription factors, such as JUN, that respond to these complexes. Interacts with protein OPG198; this interaction inhibits the repressive activity of OPG198 pseudokinase on viral replication factory formation. It depends on Mg(2+) as a cofactor. Post-translationally, autophosphorylated.

It localises to the virion. The protein resides in the host cytoplasm. The catalysed reaction is L-seryl-[protein] + ATP = O-phospho-L-seryl-[protein] + ADP + H(+). The enzyme catalyses L-threonyl-[protein] + ATP = O-phospho-L-threonyl-[protein] + ADP + H(+). In terms of biological role, essential serine/threonine-protein kinase that plays different role in the viral life cycle. Phosphorylates the host small ribosomal protein RACK1 thereby customizing the ribosomes to a state optimal for viral mRNAs (which contain poly-A leaders) but not for host mRNAs. Facilitates viral DNA replication by inhibiting host BANF1, a cellular host defense responsive to foreign DNA. Phosphorylates host BANF1 on serine and threonine residues; this leads to BANF1 relocalization to the cytoplasm, loss of dimerization and impaired DNA binding activity. Indeed, BANF1 activity depends on its DNA-binding property which is blocked by VPK1-mediated phosphorylation. Required for viral intermediate genes expression, probably by inhibiting host BANF1. Modulates cellular responses via host JUN by two different mechanisms, either by direct phosphorylation or by modulation of upstream JIP1-MAPK complexes. Seems to participate in the accumulation/processing of late proteins and thus in virion maturation. In addition, inhibits B12 repressive activity on viral DNA replication via a phosphorylation-dependent mechanism. The sequence is that of B1 kinase (OPG187) from Bos taurus (Bovine).